The chain runs to 116 residues: Ribonuclease P protein component (116 aa).

Belongs to the RnpA family. Consists of a catalytic RNA component (M1 or rnpB) and a protein subunit.

It carries out the reaction Endonucleolytic cleavage of RNA, removing 5'-extranucleotides from tRNA precursor.. Functionally, RNaseP catalyzes the removal of the 5'-leader sequence from pre-tRNA to produce the mature 5'-terminus. It can also cleave other RNA substrates such as 4.5S RNA. The protein component plays an auxiliary but essential role in vivo by binding to the 5'-leader sequence and broadening the substrate specificity of the ribozyme. In Caldanaerobacter subterraneus subsp. tengcongensis (strain DSM 15242 / JCM 11007 / NBRC 100824 / MB4) (Thermoanaerobacter tengcongensis), this protein is Ribonuclease P protein component.